The sequence spans 362 residues: Putative gustatory receptor 89a (362 aa).

Residues 1–38 are Cytoplasmic-facing; that stretch reads MLRFPHVCGLCLLLKYWQILALAPFRTSEPMVARCQRW. A helical transmembrane segment spans residues 39–59; it reads MTLIAVFRWLLLTSMAPFVLW. Residues 60–74 lie on the Extracellular side of the membrane; that stretch reads KSAAMYEATNVRHSM. Residues 75–95 form a helical membrane-spanning segment; the sequence is VFKTIALATMTGDVCISLALL. Over 96–126 the chain is Cytoplasmic; the sequence is GNHLWNRRELANLVNDLARLHRRRRLSWWST. A helical transmembrane segment spans residues 127–147; it reads LFLWLKLLLSLYDLLCSVPFL. Residues 148–166 lie on the Extracellular side of the membrane; sequence KGAGGRLPWSQLVAYGVQL. A helical transmembrane segment spans residues 167–187; the sequence is YFQHVASVYGNGIFGGILLML. Residues 188 to 223 are Cytoplasmic-facing; that stretch reads ECYNQLEREEPTNLARLLQKEYSWLRLIQRFVKLFQ. A helical membrane pass occupies residues 224-244; it reads LGIFLLVLGSFVNIMVNIYAF. Topologically, residues 245–255 are extracellular; that stretch reads MSYYVSLHGVP. Residues 256 to 276 traverse the membrane as a helical segment; the sequence is LTISNNCLVLAIQLYAVILAA. Residues 277-333 lie on the Cytoplasmic side of the membrane; sequence HLCQVRSAKLRKKCLQLEYVPEGLTQEQAMASTPFPVLTPTGNVKFRILGVFILDNS. Residues 334–354 traverse the membrane as a helical segment; it reads FWLFLVSYAMNFIVVILQTSF. Residues 355–362 are Extracellular-facing; that stretch reads EHINHGEI.

This sequence belongs to the insect chemoreceptor superfamily. Gustatory receptor (GR) family. Gr77a subfamily.

It localises to the cell membrane. In terms of biological role, probable gustatory receptor which mediates acceptance or avoidance behavior, depending on its substrates. The chain is Putative gustatory receptor 89a (Gr89a) from Drosophila melanogaster (Fruit fly).